The primary structure comprises 875 residues: GATOR2 complex protein MIOS (875 aa).

WD repeat units follow at residues 58 to 100 (SDTP…NSKF), 111 to 155 (KHAR…TPDI), 182 to 221 (GQND…QKMF), 223 to 261 (NTKA…KPVL), 265 to 306 (EQPK…TPIG), and 395 to 437 (RLRA…KQYT). The C4-type zinc finger occupies 735 to 781 (VSCNFCGKSISYSCSAVPHQGRGFSQYGVSGSPTKSKVTSCPGCRKP). C737 and C740 together coordinate Zn(2+). Phosphoserine is present on residues S759 and S766. Zn(2+) is bound by residues C775, C778, C788, C827, C830, H832, H835, H838, C849, C854, and C858. Residues 782–863 (LPRCALCLIN…CTCKCMQLDT (82 aa)) form an RING-type; atypical zinc finger.

The protein belongs to the WD repeat mio family. In terms of assembly, component of the GATOR2 subcomplex, composed of MIOS, SEC13, SEH1L, WDR24 and WDR59. The GATOR2 complex interacts with CASTOR1 and CASTOR2; the interaction is negatively regulated by arginine. CASTOR1 and CASTOR2 convey leucine availability via direct interaction with MIOS. The GATOR2 complex interacts with SESN1, SESN2 and SESN3; the interaction is negatively regulated by amino acids. Interacts with SAR1A and SAR1B; the interaction is direct, disrupted by leucine and mediates the interaction of SAR1A or SAR1B with the GATOR2 complex to negatively regulate the TORC1 signaling upon leucine deprivation.

It is found in the lysosome membrane. The GATOR2 complex is negatively regulated by the upstream amino acid sensors CASTOR1 and SESN2, which sequester the GATOR2 complex in absence of amino acids. In the presence of abundant amino acids, GATOR2 is released from CASTOR1 and SESN2 and activated. In terms of biological role, as a component of the GATOR2 complex, functions as an activator of the amino acid-sensing branch of the mTORC1 signaling pathway. The GATOR2 complex indirectly activates mTORC1 through the inhibition of the GATOR1 subcomplex. GATOR2 probably acts as an E3 ubiquitin-protein ligase toward GATOR1. In the presence of abundant amino acids, the GATOR2 complex mediates ubiquitination of the NPRL2 core component of the GATOR1 complex, leading to GATOR1 inactivation. In the absence of amino acids, GATOR2 is inhibited, activating the GATOR1 complex. Within the GATOR2 complex, MIOS is required to prevent autoubiquitination of WDR24, the catalytic subunit of the complex. The GATOR2 complex is required for brain myelination. The chain is GATOR2 complex protein MIOS from Homo sapiens (Human).